The following is a 385-amino-acid chain: Spermidine/putrescine import ATP-binding protein PotA (385 aa).

Residues 27–257 (ASFRAVSKHY…PANLFVAQFA (231 aa)) form the ABC transporter domain. Position 59–66 (59–66 (GPSGCGKT)) interacts with ATP.

The protein belongs to the ABC transporter superfamily. Spermidine/putrescine importer (TC 3.A.1.11.1) family. As to quaternary structure, the complex is composed of two ATP-binding proteins (PotA), two transmembrane proteins (PotB and PotC) and a solute-binding protein (PotD).

Its subcellular location is the cell inner membrane. The enzyme catalyses ATP + H2O + polyamine-[polyamine-binding protein]Side 1 = ADP + phosphate + polyamineSide 2 + [polyamine-binding protein]Side 1.. Part of the ABC transporter complex PotABCD involved in spermidine/putrescine import. Responsible for energy coupling to the transport system. The protein is Spermidine/putrescine import ATP-binding protein PotA of Methylococcus capsulatus (strain ATCC 33009 / NCIMB 11132 / Bath).